Consider the following 345-residue polypeptide: OVARIAN TUMOR DOMAIN-containing deubiquitinating enzyme 9 (345 aa).

An OTU domain is found at 204 to 328 (LVENKIEGDG…EVHYNSIYPE (125 aa)). The active site involves aspartate 212. Residue cysteine 215 is the Nucleophile of the active site. The active site involves histidine 321.

This sequence belongs to the peptidase C85 family.

It catalyses the reaction Thiol-dependent hydrolysis of ester, thioester, amide, peptide and isopeptide bonds formed by the C-terminal Gly of ubiquitin (a 76-residue protein attached to proteins as an intracellular targeting signal).. Its function is as follows. Hydrolase that can remove conjugated ubiquitin from proteins in vitro and may therefore play an important regulatory role at the level of protein turnover by preventing degradation. Cysteine protease with a preference for 'Lys-63' and 'Lys-48' -linked ubiquitin (UB) tetramers as substrates. Also cleaves RUB-GST fusion. The chain is OVARIAN TUMOR DOMAIN-containing deubiquitinating enzyme 9 from Arabidopsis thaliana (Mouse-ear cress).